The primary structure comprises 97 residues: ESAT-6-like protein EsxS (97 aa).

Belongs to the WXG100 family. CFP-10 subfamily. Forms a tight complex with EsxR. Exists in heterodimeric and heterotetrameric forms.

The protein localises to the secreted. In Mycobacterium tuberculosis (strain ATCC 25618 / H37Rv), this protein is ESAT-6-like protein EsxS.